Consider the following 372-residue polypeptide: Glutamate 5-kinase (372 aa).

Residue K14 coordinates ATP. S54, D141, and N153 together coordinate substrate. 173–174 (TD) contributes to the ATP binding site. Residues 280 to 358 (RGTLVLDDGA…DAIEALLGYV (79 aa)) enclose the PUA domain.

The protein belongs to the glutamate 5-kinase family.

It localises to the cytoplasm. It catalyses the reaction L-glutamate + ATP = L-glutamyl 5-phosphate + ADP. It participates in amino-acid biosynthesis; L-proline biosynthesis; L-glutamate 5-semialdehyde from L-glutamate: step 1/2. In terms of biological role, catalyzes the transfer of a phosphate group to glutamate to form L-glutamate 5-phosphate. The polypeptide is Glutamate 5-kinase (Pseudomonas paraeruginosa (strain DSM 24068 / PA7) (Pseudomonas aeruginosa (strain PA7))).